The primary structure comprises 557 residues: Aerobic glycerol-3-phosphate dehydrogenase (557 aa).

21-49 contributes to the FAD binding site; it reads DLVIIGGGITGAGIALDASERGMKVALVE.

This sequence belongs to the FAD-dependent glycerol-3-phosphate dehydrogenase family. FAD is required as a cofactor.

It localises to the cytoplasm. The catalysed reaction is a quinone + sn-glycerol 3-phosphate = dihydroxyacetone phosphate + a quinol. It participates in polyol metabolism; glycerol degradation via glycerol kinase pathway; glycerone phosphate from sn-glycerol 3-phosphate (aerobic route): step 1/1. The polypeptide is Aerobic glycerol-3-phosphate dehydrogenase (glpD) (Staphylococcus aureus (strain bovine RF122 / ET3-1)).